Reading from the N-terminus, the 702-residue chain is Kinesin-like protein KIF3A (702 aa).

Residues 14-345 (NVKVVVRCRP…LRYANRAKNI (332 aa)) enclose the Kinesin motor domain. 100–107 (GQTGTGKT) provides a ligand contact to ATP. Positions 355–593 (PKDALLRQFQ…LSRELRLQML (239 aa)) form a coiled coil. Disordered stretches follow at residues 372–424 (KKLE…KMIE) and 667–702 (LMKL…SLLQ). A compositionally biased stretch (acidic residues) spans 376–400 (EGEEISGSDISGSEEDDDEEGEIGE). Residues 410-424 (DQAGKKKVSPDKMIE) show a composition bias toward basic and acidic residues. Positions 600 to 702 (PRDYQEMIEN…PETVIDSLLQ (103 aa)) are globular. Positions 675–690 (TSKGKARPKTGRRKRS) are enriched in basic residues. S690 bears the Phosphoserine mark.

Belongs to the TRAFAC class myosin-kinesin ATPase superfamily. Kinesin family. Kinesin II subfamily. In terms of assembly, heterodimer of KIF3A and KIF3B. Interacts with CIMAP3. Interacts with CLN3. Interacts with DCTN1. Interacts with FLCN. Interacts with AP3B1.

It is found in the cytoplasm. The protein resides in the cytoskeleton. The protein localises to the cell projection. It localises to the cilium. Its subcellular location is the microtubule organizing center. It is found in the centrosome. The protein resides in the centriole. Microtubule-based anterograde translocator for membranous organelles. Plus end-directed microtubule sliding activity in vitro. Plays a role in primary cilia formation. Plays a role in centriole cohesion and subdistal appendage organization and function. Regulates the formation of the subdistal appendage via recruitment of DCTN1 to the centriole. Also required for ciliary basal feet formation and microtubule anchoring to mother centriole. The protein is Kinesin-like protein KIF3A (KIF3A) of Pongo abelii (Sumatran orangutan).